A 156-amino-acid chain; its full sequence is ATP synthase subunit b (156 aa).

A helical transmembrane segment spans residues 7 to 27; that stretch reads LIGQLIAFAIFVAFCMKFVWP.

The protein belongs to the ATPase B chain family. In terms of assembly, F-type ATPases have 2 components, F(1) - the catalytic core - and F(0) - the membrane proton channel. F(1) has five subunits: alpha(3), beta(3), gamma(1), delta(1), epsilon(1). F(0) has three main subunits: a(1), b(2) and c(10-14). The alpha and beta chains form an alternating ring which encloses part of the gamma chain. F(1) is attached to F(0) by a central stalk formed by the gamma and epsilon chains, while a peripheral stalk is formed by the delta and b chains.

The protein resides in the cell inner membrane. In terms of biological role, f(1)F(0) ATP synthase produces ATP from ADP in the presence of a proton or sodium gradient. F-type ATPases consist of two structural domains, F(1) containing the extramembraneous catalytic core and F(0) containing the membrane proton channel, linked together by a central stalk and a peripheral stalk. During catalysis, ATP synthesis in the catalytic domain of F(1) is coupled via a rotary mechanism of the central stalk subunits to proton translocation. Functionally, component of the F(0) channel, it forms part of the peripheral stalk, linking F(1) to F(0). This chain is ATP synthase subunit b, found in Pasteurella multocida (strain Pm70).